A 217-amino-acid polypeptide reads, in one-letter code: Outer-membrane lipoprotein LolB (217 aa).

The N-terminal stretch at 1-20 (MSKTVRTLALGGLVLAGLSA) is a signal peptide. A lipid anchor (N-palmitoyl cysteine) is attached at cysteine 21. Cysteine 21 carries S-diacylglycerol cysteine lipidation. A disordered region spans residues 105–124 (DTTSGAGRLEGLEGGPRSGP).

The protein belongs to the LolB family. Monomer.

It is found in the cell outer membrane. Plays a critical role in the incorporation of lipoproteins in the outer membrane after they are released by the LolA protein. The chain is Outer-membrane lipoprotein LolB from Xanthomonas axonopodis pv. citri (strain 306).